The primary structure comprises 48 residues: uncharacterized protein (48 aa).

Residues 25-47 (TFASIGVTVGVQIVILLIWGLSW) form a helical membrane-spanning segment.

It localises to the membrane. This is an uncharacterized protein from Archaeoglobus fulgidus (strain ATCC 49558 / DSM 4304 / JCM 9628 / NBRC 100126 / VC-16).